We begin with the raw amino-acid sequence, 361 residues long: Fructose-bisphosphate aldolase (361 aa).

Serine 63 contacts D-glyceraldehyde 3-phosphate. Aspartate 110 functions as the Proton donor in the catalytic mechanism. Residues histidine 111, aspartate 145, glutamate 175, and histidine 227 each coordinate Zn(2+). Glycine 228 is a binding site for dihydroxyacetone phosphate. Histidine 266 contributes to the Zn(2+) binding site. Residues 267 to 269 and 288 to 291 contribute to the dihydroxyacetone phosphate site; these read GGS and NLDT.

This sequence belongs to the class II fructose-bisphosphate aldolase family. In terms of assembly, homodimer. Requires Zn(2+) as cofactor.

It carries out the reaction beta-D-fructose 1,6-bisphosphate = D-glyceraldehyde 3-phosphate + dihydroxyacetone phosphate. The protein operates within carbohydrate degradation; glycolysis; D-glyceraldehyde 3-phosphate and glycerone phosphate from D-glucose: step 4/4. Catalyzes the aldol condensation of dihydroxyacetone phosphate (DHAP or glycerone-phosphate) with glyceraldehyde 3-phosphate (G3P) to form fructose 1,6-bisphosphate (FBP) in gluconeogenesis and the reverse reaction in glycolysis. The sequence is that of Fructose-bisphosphate aldolase (FBA1) from Kluyveromyces lactis (strain ATCC 8585 / CBS 2359 / DSM 70799 / NBRC 1267 / NRRL Y-1140 / WM37) (Yeast).